The primary structure comprises 445 residues: MSEMTQTAEEQPIDELVGWVKQHDFSLNLPPERLAFLIAIAVLSNERFDEELGEGELHDAFTIVTRLFEDTGEASAFRANNAINELVKQKLISRFTSEITDGASIYRLSPLAIGISDYYLRHRQFSKLKLSIQLSMVADEMAKAIEAAQKGGTPGHWRRNVYGVLKYSVGEIFDQIDLNQRVMDEQQQTVKQQIADLLNKDWREAINNCESLLSETSATLKELQDTLQAAGDELQTQILDIQEIVYGDDELEFVGETLFGLQMKLDRITSWGQQAIDLWIGYDRHVHKFIRTAIDMDKNRAFSQRLRQSVTDYFDAPWLLTYADAEKLTDLRDEALVLRDDEVMGQAPIDVEYEEFEQVNDLLSERIGDMLKAHKQQGAPIDLGLVLRDYLAAHPRTHHFDLARIVVDQAVRLGYSESDYQAIQPDWQAINDFGAKVQANVINKY.

The segment at 213-241 is leucine-zipper; it reads LSETSATLKELQDTLQAAGDELQTQILDI.

The protein belongs to the MukF family. In terms of assembly, interacts, and probably forms a ternary complex, with MukE and MukB via its C-terminal region. The complex formation is stimulated by calcium or magnesium. It is required for an interaction between MukE and MukB.

It is found in the cytoplasm. The protein resides in the nucleoid. Functionally, involved in chromosome condensation, segregation and cell cycle progression. May participate in facilitating chromosome segregation by condensation DNA from both sides of a centrally located replisome during cell division. Not required for mini-F plasmid partitioning. Probably acts via its interaction with MukB and MukE. Overexpression results in anucleate cells. It has a calcium binding activity. The chain is Chromosome partition protein MukF from Vibrio atlanticus (strain LGP32) (Vibrio splendidus (strain Mel32)).